The following is a 199-amino-acid chain: uncharacterized protein (199 aa).

The protein to M.jannaschii MJ1356.

This is an uncharacterized protein from Methanocaldococcus jannaschii (strain ATCC 43067 / DSM 2661 / JAL-1 / JCM 10045 / NBRC 100440) (Methanococcus jannaschii).